A 1520-amino-acid chain; its full sequence is Accessory colonization factor AcfD (1520 aa).

The signal sequence occupies residues methionine 1–glycine 16. Cysteine 17 is lipidated: N-palmitoyl cysteine. The S-diacylglycerol cysteine moiety is linked to residue cysteine 17. The region spanning glycine 1085–glutamate 1388 is the Peptidase M60 domain.

It localises to the cell membrane. This is Accessory colonization factor AcfD (acfD) from Vibrio cholerae serotype O1 (strain ATCC 39315 / El Tor Inaba N16961).